A 359-amino-acid polypeptide reads, in one-letter code: 3-dehydroquinate synthase (359 aa).

NAD(+)-binding positions include 71–76 (DGEAHK), 105–109 (GVIGD), 129–130 (TT), K142, K151, and 169–172 (TLHT). 3 residues coordinate Zn(2+): E184, H247, and H264.

Belongs to the sugar phosphate cyclases superfamily. Dehydroquinate synthase family. Co(2+) is required as a cofactor. It depends on Zn(2+) as a cofactor. The cofactor is NAD(+).

The protein localises to the cytoplasm. It catalyses the reaction 7-phospho-2-dehydro-3-deoxy-D-arabino-heptonate = 3-dehydroquinate + phosphate. It functions in the pathway metabolic intermediate biosynthesis; chorismate biosynthesis; chorismate from D-erythrose 4-phosphate and phosphoenolpyruvate: step 2/7. Functionally, catalyzes the conversion of 3-deoxy-D-arabino-heptulosonate 7-phosphate (DAHP) to dehydroquinate (DHQ). The sequence is that of 3-dehydroquinate synthase from Neisseria meningitidis serogroup C (strain 053442).